An 880-amino-acid chain; its full sequence is EP-cadherin (880 aa).

The signal sequence occupies residues 1–28 (MGSTRLRNASVWLCGLLCLLQVVPSINA). Positions 29–155 (DVSGCKPGFS…THTGLKRKKR (127 aa)) are excised as a propeptide. The N-linked (GlcNAc...) asparagine glycan is linked to Asn-61. Cadherin domains follow at residues 156–263 (DWVI…RPKF), 264–376 (TQDV…APIF), 377–487 (DPKT…APFF), 488–593 (VPAV…DNGP), and 594–704 (VPSP…GFDL). The Extracellular segment spans residues 156–703 (DWVIPPIKVS…CQEKLVGGFD (548 aa)). O-linked (GalNAc...) threonine glycans are attached at residues Thr-343, Thr-382, and Thr-400. A glycan (N-linked (GlcNAc...) asparagine) is linked at Asn-425. Residues Thr-428, Thr-469, Thr-471, Thr-473, and Thr-475 are each glycosylated (O-linked (GalNAc...) threonine). Residue Asn-558 is glycosylated (N-linked (GlcNAc...) asparagine). Residues Thr-562, Thr-576, Thr-578, and Thr-580 are each glycosylated (O-linked (GalNAc...) threonine). 2 disulfides stabilise this stretch: Cys-603–Cys-687 and Cys-685–Cys-694. Asn-681 carries N-linked (GlcNAc...) asparagine glycosylation. A helical membrane pass occupies residues 704 to 728 (LPIILVILGSVLALLILFLLLLLFL). At 729 to 880 (KRKKVVKEPL…DMYGGDDDEE (152 aa)) the chain is on the cytoplasmic side. Positions 790–826 (PAPHYRPRPSNPDEIGNFIDENLDAADNDPTAPPYDS) are disordered.

In terms of assembly, interacts with CTNNB1.

It localises to the cell membrane. In terms of biological role, cadherins are calcium-dependent cell adhesion proteins. They preferentially interact with themselves in a homophilic manner in connecting cells; cadherins may thus contribute to the sorting of heterogeneous cell types. The polypeptide is EP-cadherin (Xenopus laevis (African clawed frog)).